Consider the following 549-residue polypeptide: CTP synthase (549 aa).

The segment at 1–270 is amidoligase domain; sequence MTKFVFVTGG…DRLICEELRL (270 aa). S13 contributes to the CTP binding site. S13 contacts UTP. ATP is bound by residues 14–19 and D71; that span reads SLGKGI. D71 and E144 together coordinate Mg(2+). Residues 151 to 153, 191 to 196, and K227 each bind CTP; these read DIE and KTKPTQ. UTP-binding positions include 191-196 and K227; that span reads KTKPTQ. Residues 295 to 547 enclose the Glutamine amidotransferase type-1 domain; sequence TIGMVGKYVD…VEAALAAQRQ (253 aa). G356 contributes to the L-glutamine binding site. The active-site Nucleophile; for glutamine hydrolysis is the C383. L-glutamine-binding positions include 384-387, E407, and R473; that span reads LGMQ. Active-site residues include H520 and E522.

It belongs to the CTP synthase family. As to quaternary structure, homotetramer.

It catalyses the reaction UTP + L-glutamine + ATP + H2O = CTP + L-glutamate + ADP + phosphate + 2 H(+). The enzyme catalyses L-glutamine + H2O = L-glutamate + NH4(+). It carries out the reaction UTP + NH4(+) + ATP = CTP + ADP + phosphate + 2 H(+). The protein operates within pyrimidine metabolism; CTP biosynthesis via de novo pathway; CTP from UDP: step 2/2. With respect to regulation, allosterically activated by GTP, when glutamine is the substrate; GTP has no effect on the reaction when ammonia is the substrate. The allosteric effector GTP functions by stabilizing the protein conformation that binds the tetrahedral intermediate(s) formed during glutamine hydrolysis. Inhibited by the product CTP, via allosteric rather than competitive inhibition. Functionally, catalyzes the ATP-dependent amination of UTP to CTP with either L-glutamine or ammonia as the source of nitrogen. Regulates intracellular CTP levels through interactions with the four ribonucleotide triphosphates. The sequence is that of CTP synthase from Cupriavidus metallidurans (strain ATCC 43123 / DSM 2839 / NBRC 102507 / CH34) (Ralstonia metallidurans).